A 536-amino-acid polypeptide reads, in one-letter code: Carboxypeptidase Y homolog A (536 aa).

Residues 1–17 (MKFFTTGLLATAALAAA) form the signal peptide. Positions 18–124 (QEQQVLQAED…KLHNYDLRVK (107 aa)) are excised as a propeptide. 5 disulfides stabilise this stretch: Cys-172-Cys-412, Cys-306-Cys-320, Cys-330-Cys-353, Cys-337-Cys-346, and Cys-375-Cys-382. The N-linked (GlcNAc...) asparagine glycan is linked to Asn-203. Residue Ser-259 is part of the active site. Residue Asp-451 is part of the active site. Asn-502 is a glycosylation site (N-linked (GlcNAc...) asparagine). His-513 is an active-site residue.

This sequence belongs to the peptidase S10 family.

The protein resides in the vacuole. The enzyme catalyses Release of a C-terminal amino acid with broad specificity.. Its function is as follows. Vacuolar carboxypeptidase involved in degradation of small peptides. Digests preferentially peptides containing an aliphatic or hydrophobic residue in P1' position, as well as methionine, leucine or phenylalanine in P1 position of ester substrate. The chain is Carboxypeptidase Y homolog A (cpyA) from Trichophyton rubrum (Athlete's foot fungus).